Consider the following 438-residue polypeptide: Diaminopimelate decarboxylase (438 aa).

An N6-(pyridoxal phosphate)lysine modification is found at Lys73. Residues Ser217, Gly254, and 294–297 (EPGR) contribute to the pyridoxal 5'-phosphate site. Arg297, Arg333, and Tyr337 together coordinate substrate. Catalysis depends on Cys362, which acts as the Proton donor. Substrate-binding residues include Glu363 and Tyr391. Tyr391 contacts pyridoxal 5'-phosphate.

The protein belongs to the Orn/Lys/Arg decarboxylase class-II family. LysA subfamily. As to quaternary structure, homodimer. It depends on pyridoxal 5'-phosphate as a cofactor.

It carries out the reaction meso-2,6-diaminopimelate + H(+) = L-lysine + CO2. It functions in the pathway amino-acid biosynthesis; L-lysine biosynthesis via DAP pathway; L-lysine from DL-2,6-diaminopimelate: step 1/1. With respect to regulation, competitively inhibited by the substrate analog azelaic acid in vitro but not in vivo. Functionally, specifically catalyzes the decarboxylation of meso-diaminopimelate (meso-DAP) to L-lysine. This is Diaminopimelate decarboxylase from Methanocaldococcus jannaschii (strain ATCC 43067 / DSM 2661 / JAL-1 / JCM 10045 / NBRC 100440) (Methanococcus jannaschii).